A 328-amino-acid polypeptide reads, in one-letter code: MKVNTLLVAVAAGTAMAAPQLKKRAGFTFFGVTEAGAEFGEKSIPGVWGTDYTFPDTESILTLISKGFNTFRIPFLMERLTPEMTGSFDEGYLKNLTSVVNAVTDAGAWAIVDAQNFGRFNGEIISSASDFQTWWKNVAAEFADNKNVIFDTNNEFHDMDQTLVLDLNQAAINGIRAAGATSQYIFVEGNSYTGAWTWTDNNDNLKSLTDPQDKIVYEMHQYLDTDGSGTHETCVSETIGAERVESATQWLKDNGKLGVIGEFAGGNNEICRAAVKSLLDALKENDDVWLGALWWAAGPWWEDYMFSMEPTDGIAYTGMLSTLEAYMN.

Positions 1–17 are cleaved as a signal peptide; that stretch reads MKVNTLLVAVAAGTAMA. N95 is a glycosylation site (N-linked (GlcNAc...) asparagine). The active-site Proton donor is E155. The Nucleophile role is filled by E262.

The protein belongs to the glycosyl hydrolase 5 (cellulase A) family.

Its subcellular location is the secreted. It carries out the reaction Endohydrolysis of (1-&gt;4)-beta-D-glucosidic linkages in cellulose, lichenin and cereal beta-D-glucans.. Its function is as follows. Has endoglucanase activity on substrates containing beta-1,4 glycosidic bonds, like in carboxymethylcellulose (CMC), hydroxyethylcellulose (HEC) and beta-glucan. Involved in the degradation of complex natural cellulosic substrates. The polypeptide is Endo-beta-1,4-glucanase B (eglB) (Emericella nidulans (strain FGSC A4 / ATCC 38163 / CBS 112.46 / NRRL 194 / M139) (Aspergillus nidulans)).